Reading from the N-terminus, the 499-residue chain is Glycerol kinase (499 aa).

Threonine 13 provides a ligand contact to ADP. Residues threonine 13, threonine 14, and serine 15 each coordinate ATP. Threonine 13 is a sn-glycerol 3-phosphate binding site. Arginine 17 lines the ADP pocket. Sn-glycerol 3-phosphate is bound by residues arginine 83, glutamate 84, tyrosine 135, and aspartate 245. Positions 83, 84, 135, 245, and 246 each coordinate glycerol. ADP is bound by residues threonine 267 and glycine 310. Positions 267, 310, 314, and 411 each coordinate ATP. Glycine 411 and asparagine 415 together coordinate ADP.

It belongs to the FGGY kinase family.

The enzyme catalyses glycerol + ATP = sn-glycerol 3-phosphate + ADP + H(+). The protein operates within polyol metabolism; glycerol degradation via glycerol kinase pathway; sn-glycerol 3-phosphate from glycerol: step 1/1. With respect to regulation, inhibited by fructose 1,6-bisphosphate (FBP). Key enzyme in the regulation of glycerol uptake and metabolism. Catalyzes the phosphorylation of glycerol to yield sn-glycerol 3-phosphate. The chain is Glycerol kinase from Xanthomonas campestris pv. campestris (strain ATCC 33913 / DSM 3586 / NCPPB 528 / LMG 568 / P 25).